The chain runs to 194 residues: MEEKDKEEKVTGENLEPEDKNLEQEDKEEVVGPQEEQQIDEAKNWEEEYNKLLDEHNRLKNQYLRLYADFDNYRKRTQREKEELLKYEGMEFLKKLLPVLDNFERALKEKDTDPQKVIEGVELTHRQLLEILNQHEVKAIEAQGQPFNPELHEALMVEVREDLEENTVIEELVKGYFYKDKVLRPALVKVSKKQ.

Residues Met-1–Gln-24 show a composition bias toward basic and acidic residues. The tract at residues Met-1–Glu-41 is disordered.

It belongs to the GrpE family. Homodimer.

Its subcellular location is the cytoplasm. Its function is as follows. Participates actively in the response to hyperosmotic and heat shock by preventing the aggregation of stress-denatured proteins, in association with DnaK and GrpE. It is the nucleotide exchange factor for DnaK and may function as a thermosensor. Unfolded proteins bind initially to DnaJ; upon interaction with the DnaJ-bound protein, DnaK hydrolyzes its bound ATP, resulting in the formation of a stable complex. GrpE releases ADP from DnaK; ATP binding to DnaK triggers the release of the substrate protein, thus completing the reaction cycle. Several rounds of ATP-dependent interactions between DnaJ, DnaK and GrpE are required for fully efficient folding. The protein is Protein GrpE of Carboxydothermus hydrogenoformans (strain ATCC BAA-161 / DSM 6008 / Z-2901).